The primary structure comprises 467 residues: UDP-N-acetylmuramate--L-alanine ligase (467 aa).

112–118 (GTHGKTT) serves as a coordination point for ATP.

It belongs to the MurCDEF family.

It localises to the cytoplasm. It carries out the reaction UDP-N-acetyl-alpha-D-muramate + L-alanine + ATP = UDP-N-acetyl-alpha-D-muramoyl-L-alanine + ADP + phosphate + H(+). Its pathway is cell wall biogenesis; peptidoglycan biosynthesis. Its function is as follows. Cell wall formation. This Paraburkholderia phytofirmans (strain DSM 17436 / LMG 22146 / PsJN) (Burkholderia phytofirmans) protein is UDP-N-acetylmuramate--L-alanine ligase.